A 451-amino-acid chain; its full sequence is Phosphoglucosamine mutase (451 aa).

Ser-102 functions as the Phosphoserine intermediate in the catalytic mechanism. 4 residues coordinate Mg(2+): Ser-102, Asp-242, Asp-244, and Asp-246. Ser-102 is modified (phosphoserine).

It belongs to the phosphohexose mutase family. Requires Mg(2+) as cofactor. Post-translationally, activated by phosphorylation.

The enzyme catalyses alpha-D-glucosamine 1-phosphate = D-glucosamine 6-phosphate. Functionally, catalyzes the conversion of glucosamine-6-phosphate to glucosamine-1-phosphate. The chain is Phosphoglucosamine mutase from Staphylococcus epidermidis (strain ATCC 35984 / DSM 28319 / BCRC 17069 / CCUG 31568 / BM 3577 / RP62A).